The primary structure comprises 55 residues: Large ribosomal subunit protein bL33 (55 aa).

This sequence belongs to the bacterial ribosomal protein bL33 family.

The sequence is that of Large ribosomal subunit protein bL33 from Aliivibrio salmonicida (strain LFI1238) (Vibrio salmonicida (strain LFI1238)).